The chain runs to 500 residues: Probable malate:quinone oxidoreductase (500 aa).

The protein belongs to the MQO family. Requires FAD as cofactor.

It catalyses the reaction (S)-malate + a quinone = a quinol + oxaloacetate. Its pathway is carbohydrate metabolism; tricarboxylic acid cycle; oxaloacetate from (S)-malate (quinone route): step 1/1. The sequence is that of Probable malate:quinone oxidoreductase from Bacillus cytotoxicus (strain DSM 22905 / CIP 110041 / 391-98 / NVH 391-98).